The chain runs to 184 residues: Large ribosomal subunit protein uL6 (184 aa).

It belongs to the universal ribosomal protein uL6 family. Part of the 50S ribosomal subunit.

Functionally, this protein binds to the 23S rRNA, and is important in its secondary structure. It is located near the subunit interface in the base of the L7/L12 stalk, and near the tRNA binding site of the peptidyltransferase center. The sequence is that of Large ribosomal subunit protein uL6 from Fervidobacterium nodosum (strain ATCC 35602 / DSM 5306 / Rt17-B1).